Consider the following 209-residue polypeptide: Putative BTB/POZ domain-containing protein At2g40450 (209 aa).

Residues 24 to 98 enclose the BTB domain; sequence ADVRLKAGDS…IYRVDGSICS (75 aa).

It participates in protein modification; protein ubiquitination. Functionally, may act as a substrate-specific adapter of an E3 ubiquitin-protein ligase complex (CUL3-RBX1-BTB) which mediates the ubiquitination and subsequent proteasomal degradation of target proteins. The chain is Putative BTB/POZ domain-containing protein At2g40450 from Arabidopsis thaliana (Mouse-ear cress).